Reading from the N-terminus, the 237-residue chain is MKREQLYSGKAKTIYATDNPDTLIAEFRNSLTAFNGEKKGEMEKKGYYNAQISKKIFEMLEASGIKTHFVSMLSDIEMLVKKVEIIKIEVIVRNIAAGSITKKYPMKEGTIFESPVLVFDFKSDEYGDPMLNDDIAVALGIATREELATLRKLALRINELLVPYLDEKGILLPDFKLEFGRRDGEIILSDEISCDTCRFWDKKTGQSMDKDVFRFDKGDISKAYEEVARRIVPEIFE.

It belongs to the SAICAR synthetase family.

The catalysed reaction is 5-amino-1-(5-phospho-D-ribosyl)imidazole-4-carboxylate + L-aspartate + ATP = (2S)-2-[5-amino-1-(5-phospho-beta-D-ribosyl)imidazole-4-carboxamido]succinate + ADP + phosphate + 2 H(+). Its pathway is purine metabolism; IMP biosynthesis via de novo pathway; 5-amino-1-(5-phospho-D-ribosyl)imidazole-4-carboxamide from 5-amino-1-(5-phospho-D-ribosyl)imidazole-4-carboxylate: step 1/2. The chain is Phosphoribosylaminoimidazole-succinocarboxamide synthase from Methanosarcina acetivorans (strain ATCC 35395 / DSM 2834 / JCM 12185 / C2A).